The primary structure comprises 363 residues: NAD(P)H-quinone oxidoreductase subunit 1, chloroplastic (363 aa).

The next 6 membrane-spanning stretches (helical) occupy residues 30-50, 98-118, 127-147, 248-268, 300-320, and 336-356; these read LVPIFTPVSGITIGVLVIVWL, FSIGPSIAVISILLSYSVIPF, LSIGVFLWIAISSIAPIGLLM, YSGIKFGLFYVASYLNLLVSS, VFGTTIGILITLAKAYLFLFI, and LLNLGWKFLLPISLGNLLLTT.

This sequence belongs to the complex I subunit 1 family. As to quaternary structure, NDH is composed of at least 16 different subunits, 5 of which are encoded in the nucleus.

It localises to the plastid. It is found in the chloroplast thylakoid membrane. The catalysed reaction is a plastoquinone + NADH + (n+1) H(+)(in) = a plastoquinol + NAD(+) + n H(+)(out). The enzyme catalyses a plastoquinone + NADPH + (n+1) H(+)(in) = a plastoquinol + NADP(+) + n H(+)(out). Functionally, NDH shuttles electrons from NAD(P)H:plastoquinone, via FMN and iron-sulfur (Fe-S) centers, to quinones in the photosynthetic chain and possibly in a chloroplast respiratory chain. The immediate electron acceptor for the enzyme in this species is believed to be plastoquinone. Couples the redox reaction to proton translocation, and thus conserves the redox energy in a proton gradient. The protein is NAD(P)H-quinone oxidoreductase subunit 1, chloroplastic of Drimys granadensis.